Reading from the N-terminus, the 295-residue chain is Urease accessory protein UreD (295 aa).

This sequence belongs to the UreD family. As to quaternary structure, ureD, UreF and UreG form a complex that acts as a GTP-hydrolysis-dependent molecular chaperone, activating the urease apoprotein by helping to assemble the nickel containing metallocenter of UreC. The UreE protein probably delivers the nickel.

The protein resides in the cytoplasm. Functionally, required for maturation of urease via the functional incorporation of the urease nickel metallocenter. The sequence is that of Urease accessory protein UreD from Saccharophagus degradans (strain 2-40 / ATCC 43961 / DSM 17024).